The primary structure comprises 493 residues: Protein nucleotidyltransferase YdiU (493 aa).

Residues Gly96, Gly98, Arg99, Lys119, Asp131, Gly132, Arg182, and Arg189 each contribute to the ATP site. The active-site Proton acceptor is Asp258. 2 residues coordinate Mg(2+): Asn259 and Asp268. Asp268 contributes to the ATP binding site. The segment at 471-493 is disordered; it reads EKYTEFKNPPAPKERVSQTFCGT.

This sequence belongs to the SELO family. It depends on Mg(2+) as a cofactor. Requires Mn(2+) as cofactor.

It catalyses the reaction L-seryl-[protein] + ATP = 3-O-(5'-adenylyl)-L-seryl-[protein] + diphosphate. It carries out the reaction L-threonyl-[protein] + ATP = 3-O-(5'-adenylyl)-L-threonyl-[protein] + diphosphate. The enzyme catalyses L-tyrosyl-[protein] + ATP = O-(5'-adenylyl)-L-tyrosyl-[protein] + diphosphate. The catalysed reaction is L-histidyl-[protein] + UTP = N(tele)-(5'-uridylyl)-L-histidyl-[protein] + diphosphate. It catalyses the reaction L-seryl-[protein] + UTP = O-(5'-uridylyl)-L-seryl-[protein] + diphosphate. It carries out the reaction L-tyrosyl-[protein] + UTP = O-(5'-uridylyl)-L-tyrosyl-[protein] + diphosphate. Functionally, nucleotidyltransferase involved in the post-translational modification of proteins. It can catalyze the addition of adenosine monophosphate (AMP) or uridine monophosphate (UMP) to a protein, resulting in modifications known as AMPylation and UMPylation. The polypeptide is Protein nucleotidyltransferase YdiU (Nitrosococcus oceani (strain ATCC 19707 / BCRC 17464 / JCM 30415 / NCIMB 11848 / C-107)).